A 234-amino-acid polypeptide reads, in one-letter code: Putative lipoyltransferase 2, mitochondrial (234 aa).

The N-terminal 28 residues, 1–28 (MPFVRPLVTVVRAGRHSYSAGLQLQQRL), are a transit peptide targeting the mitochondrion. Positions 39–220 (AEFRNYLVLQ…SFAKVFECRL (182 aa)) constitute a BPL/LPL catalytic domain. Substrate contacts are provided by residues 83–90 (RGGLITFH), 150–152 (AIG), and 163–165 (GIG). The Acyl-thioester intermediate role is filled by Cys181.

Belongs to the LipB family.

It is found in the mitochondrion. It catalyses the reaction octanoyl-[ACP] + L-lysyl-[protein] = N(6)-octanoyl-L-lysyl-[protein] + holo-[ACP] + H(+). Its pathway is protein modification; protein lipoylation via endogenous pathway; protein N(6)-(lipoyl)lysine from octanoyl-[acyl-carrier-protein]: step 1/2. In terms of biological role, catalyzes the transfer of endogenously produced octanoic acid from octanoyl-acyl-carrier-protein onto the lipoyl domains of lipoate-dependent enzymes. Lipoyl-ACP can also act as a substrate although octanoyl-ACP is likely to be the physiological substrate. The polypeptide is Putative lipoyltransferase 2, mitochondrial (Drosophila melanogaster (Fruit fly)).